Consider the following 787-residue polypeptide: Longitudinals lacking protein, isoforms A/B/D/L (787 aa).

The region spanning 32-97 (VDCTLAAEGK…MYRGEVNISQ (66 aa)) is the BTB domain. Disordered regions lie at residues 115–200 (LSDN…SSVL), 228–340 (SSGP…ASAS), 506–560 (AKDV…SGGK), and 653–677 (TTGSGQSPSNSGHNNSAGGGSSVLG). Low complexity-rich tracts occupy residues 162-175 (SGDVSGSREGSSSP), 228-251 (SSGPAAGTSSQASSTQQQQPLTST), 263-293 (TSSTAAPASGASASAAVQQAHLHQQQAQTTS), 329-340 (NSATGPNPASAS), 537-560 (HSSSNHSSNGNGSGKPTKTSSGGK), and 659-668 (SPSNSGHNNS). The C2H2-type 1; degenerate zinc finger occupies 685–707 (HPCPVCGRVYKLKSSLRNHQKWE). A C2H2-type 2 zinc finger spans residues 714-737 (FQCPFCVYRAKQKMHIGRHMERMH).

As to quaternary structure, isoform D interacts with JIL-1. By stage 11, isoform B is expressed throughout the mesoderm, whereas isoform A, isoform D and isoform L are expressed throughout the ectoderm. Expression becomes restricted during later stages; starting from stage 14 to 16, isoform B is expressed in muscle. Isoform A, isoform D, and at low levels isoform B, are expressed in the CNS. Expression is also seen in specific types of cells in the embryo; isoform A and isoform L are expressed in a dynamic pattern in the ventral neurogenic region starting at stage 7. Isoform L is expressed around the tracheal pits at stage 11.

It is found in the nucleus. In terms of biological role, putative transcription factor required for axon growth and guidance in the central and peripheral nervous systems. Repels CNS axons away from the midline by promoting the expression of the midline repellent sli and its receptor robo. The sequence is that of Longitudinals lacking protein, isoforms A/B/D/L from Drosophila melanogaster (Fruit fly).